The sequence spans 273 residues: Large ribosomal subunit protein uL2 (273 aa).

2 disordered regions span residues 35 to 54 (DKKD…TRHI) and 222 to 273 (GMAM…RRNK). Over residues 229–239 (DHPHGGGEGRN) the composition is skewed to basic and acidic residues. Residues 253–273 (KGFKTRKNKRTDKYIVRRRNK) are compositionally biased toward basic residues.

Belongs to the universal ribosomal protein uL2 family. Part of the 50S ribosomal subunit. Forms a bridge to the 30S subunit in the 70S ribosome.

Its function is as follows. One of the primary rRNA binding proteins. Required for association of the 30S and 50S subunits to form the 70S ribosome, for tRNA binding and peptide bond formation. It has been suggested to have peptidyltransferase activity; this is somewhat controversial. Makes several contacts with the 16S rRNA in the 70S ribosome. This chain is Large ribosomal subunit protein uL2, found in Aeromonas hydrophila subsp. hydrophila (strain ATCC 7966 / DSM 30187 / BCRC 13018 / CCUG 14551 / JCM 1027 / KCTC 2358 / NCIMB 9240 / NCTC 8049).